The sequence spans 438 residues: Trigger factor (438 aa).

A PPIase FKBP-type domain is found at 163-248 (GDKLNIDFEG…VKRIETTEAR (86 aa)).

It belongs to the FKBP-type PPIase family. Tig subfamily.

Its subcellular location is the cytoplasm. The enzyme catalyses [protein]-peptidylproline (omega=180) = [protein]-peptidylproline (omega=0). Its function is as follows. Involved in protein export. Acts as a chaperone by maintaining the newly synthesized protein in an open conformation. Functions as a peptidyl-prolyl cis-trans isomerase. This chain is Trigger factor, found in Syntrophomonas wolfei subsp. wolfei (strain DSM 2245B / Goettingen).